Here is a 216-residue protein sequence, read N- to C-terminus: MHGNGGQPAAGGSESALSREGQPGPSGAAQGQVISNERSPRRYSTRTINGVQATNKFTAVGNPSLQRDPDWYRWNYNHSIAVWLRECSRSHAKICNCGQFRKHWFQECAGLEDRSTQASLEEAILRPLRVQGKRAKRKLDYHYSQPTPNRKKVYKTVRWQDELADREADFTPSEEDGGTTSSDFDGDINFDIGGDSGIVDELLGRPFTTPAPVRIV.

The segment at 1–50 (MHGNGGQPAAGGSESALSREGQPGPSGAAQGQVISNERSPRRYSTRTING) is disordered. Residues 21-32 (GQPGPSGAAQGQ) are compositionally biased toward low complexity. The Phosphocysteine intermediate role is filled by cysteine 95. Positions 165-187 (DREADFTPSEEDGGTTSSDFDGD) are disordered. Residues 178-187 (GTTSSDFDGD) show a composition bias toward low complexity.

The protein belongs to the gyrovirus protein VP2 family.

The enzyme catalyses O-phospho-L-tyrosyl-[protein] + H2O = L-tyrosyl-[protein] + phosphate. It carries out the reaction O-phospho-L-seryl-[protein] + H2O = L-seryl-[protein] + phosphate. It catalyses the reaction O-phospho-L-threonyl-[protein] + H2O = L-threonyl-[protein] + phosphate. Functionally, may act as a scaffold protein in virion assembly. May also play a role in intracellular signaling during viral replication. The protein is Dual specificity protein phosphatase VP2 (VP2) of Gallus gallus (Chicken).